The primary structure comprises 160 residues: MAAERKTRLSKNLLRMKFMQRGLDSETKKQLEEEEKKIISEEHWYLDLPELKEKESFIIEEQSFLLCEDLLYGRMSFRGFNPEVEKLMLQMNAKHKAEEVEDETVELDVSDEEMARRYETLVGTIGKKFARKRDHANYEEDENGDITPIKAKKMFLKPQD.

Residues Lys37 and Lys86 each participate in a glycyl lysine isopeptide (Lys-Gly) (interchain with G-Cter in SUMO2) cross-link. Ser110 is subject to Phosphoserine. The Nuclear localization signal motif lies at Arg116–Arg133. A Glycyl lysine isopeptide (Lys-Gly) (interchain with G-Cter in SUMO2) cross-link involves residue Lys127. The residue at position 147 (Thr147) is a Phosphothreonine. Glycyl lysine isopeptide (Lys-Gly) (interchain with G-Cter in SUMO2) cross-links involve residues Lys150 and Lys153.

This sequence belongs to the MPP6 family. As to quaternary structure, associates with the RNA exosome complex, mediated by EXOSC3. Interacts with ARHGAP18. Interacts with exosome cofactors EXOSC10 and MTREX. Phosphorylated in M (mitotic) phase.

Its subcellular location is the nucleus. The protein resides in the nucleolus. The protein localises to the cytoplasm. Its function is as follows. RNA-binding protein that associates with the RNA exosome complex. Involved in the 3'-processing of the 7S pre-RNA to the mature 5.8S rRNA and play a role in recruiting the RNA exosome complex to pre-rRNA; this function may include C1D. The protein is M-phase phosphoprotein 6 of Homo sapiens (Human).